The sequence spans 347 residues: MKAIKLTGHERPLTQVKYNKEGDLLFSCSKDSSASVWYSLNGERLGTLDGHTGTIWSIDVDCFTKYCVTGSADYSIKLWDVSNGQCVATWKSPVPVKRVEFSPCGNYFLAILDNVMKNPGSINIYEIERDSATHELTKVSEEPIHKIITHEGLDAATVAGWSTKGKYIIAGHKDGKISKYDVSNNYEYVDSIDLHEKSISDMQFSPDLTYFITSSRDTNSFLVDVSTLQVLKKYETDCPLNTAVITPLKEFIILGGGQEAKDVTTTSANEGKFEARFYHKIFEEEIGRVQGHFGPLNTVAISPQGTSYASGGEDGFIRLHHFEKSYFDFKYDVEKAAEAKEHMQEAN.

WD repeat units lie at residues 8–47 (GHER…RLGT), 50–89 (GHTG…CVAT), 149–190 (THEG…EYVD), 194–233 (LHEK…VLKK), and 291–330 (GHFG…FDFK). The residue at position 302 (serine 302) is a Phosphoserine.

This sequence belongs to the eIF-3 subunit I family. As to quaternary structure, component of the eukaryotic translation initiation factor 3 (eIF-3) complex.

The protein resides in the cytoplasm. Component of the eukaryotic translation initiation factor 3 (eIF-3) complex, which is involved in protein synthesis of a specialized repertoire of mRNAs and, together with other initiation factors, stimulates binding of mRNA and methionyl-tRNAi to the 40S ribosome. The eIF-3 complex specifically targets and initiates translation of a subset of mRNAs involved in cell proliferation. This chain is Eukaryotic translation initiation factor 3 subunit I, found in Saccharomyces cerevisiae (strain YJM789) (Baker's yeast).